Consider the following 172-residue polypeptide: Inorganic pyrophosphatase (172 aa).

Residues K26, R40, and Y52 each contribute to the substrate site. 3 residues coordinate Mg(2+): D62, D67, and D99. Y138 contributes to the substrate binding site.

The protein belongs to the PPase family. In terms of assembly, homohexamer. Mg(2+) serves as cofactor.

It is found in the cytoplasm. It catalyses the reaction diphosphate + H2O = 2 phosphate + H(+). In terms of biological role, catalyzes the hydrolysis of inorganic pyrophosphate (PPi) forming two phosphate ions. The polypeptide is Inorganic pyrophosphatase (Saccharolobus solfataricus (strain ATCC 35092 / DSM 1617 / JCM 11322 / P2) (Sulfolobus solfataricus)).